A 355-amino-acid polypeptide reads, in one-letter code: Peptide chain release factor 1 (355 aa).

Glutamine 233 bears the N5-methylglutamine mark. Basic and acidic residues predominate over residues 280-293 (ERRKKEQERADSRR). Residues 280 to 308 (ERRKKEQERADSRRGQVGSGDRSERIRTY) form a disordered region.

The protein belongs to the prokaryotic/mitochondrial release factor family. Methylated by PrmC. Methylation increases the termination efficiency of RF1.

It localises to the cytoplasm. Functionally, peptide chain release factor 1 directs the termination of translation in response to the peptide chain termination codons UAG and UAA. The protein is Peptide chain release factor 1 of Rickettsia felis (strain ATCC VR-1525 / URRWXCal2) (Rickettsia azadi).